A 213-amino-acid chain; its full sequence is Large ribosomal subunit protein uL1 (213 aa).

This sequence belongs to the universal ribosomal protein uL1 family. In terms of assembly, part of the 50S ribosomal subunit.

Functionally, binds directly to 23S rRNA. Probably involved in E site tRNA release. Protein L1 is also a translational repressor protein, it controls the translation of its operon by binding to its mRNA. This is Large ribosomal subunit protein uL1 from Methanococcus voltae.